The sequence spans 397 residues: Arginine biosynthesis bifunctional protein ArgJ (397 aa).

Substrate contacts are provided by Thr-147, Lys-173, Thr-184, Glu-270, Asn-392, and Thr-397. Thr-184 functions as the Nucleophile in the catalytic mechanism.

It belongs to the ArgJ family. As to quaternary structure, heterotetramer of two alpha and two beta chains.

It localises to the cytoplasm. It catalyses the reaction N(2)-acetyl-L-ornithine + L-glutamate = N-acetyl-L-glutamate + L-ornithine. The catalysed reaction is L-glutamate + acetyl-CoA = N-acetyl-L-glutamate + CoA + H(+). Its pathway is amino-acid biosynthesis; L-arginine biosynthesis; L-ornithine and N-acetyl-L-glutamate from L-glutamate and N(2)-acetyl-L-ornithine (cyclic): step 1/1. The protein operates within amino-acid biosynthesis; L-arginine biosynthesis; N(2)-acetyl-L-ornithine from L-glutamate: step 1/4. Functionally, catalyzes two activities which are involved in the cyclic version of arginine biosynthesis: the synthesis of N-acetylglutamate from glutamate and acetyl-CoA as the acetyl donor, and of ornithine by transacetylation between N(2)-acetylornithine and glutamate. This Streptococcus mutans serotype c (strain ATCC 700610 / UA159) protein is Arginine biosynthesis bifunctional protein ArgJ.